Here is a 425-residue protein sequence, read N- to C-terminus: Protein CLP1 homolog (425 aa).

Residues Glu18, Lys59, and 121-126 (DVGKST) contribute to the ATP site.

It belongs to the Clp1 family. Clp1 subfamily.

It is found in the nucleus. Functionally, required for endonucleolytic cleavage during polyadenylation-dependent pre-mRNA 3'-end formation. This chain is Protein CLP1 homolog (cbc), found in Drosophila mojavensis (Fruit fly).